The chain runs to 325 residues: Secreted RxLR effector protein RXLR-C07 (325 aa).

The signal sequence occupies residues 1-19 (MQGVRITILWCIVLATIYA). 5 TPR repeats span residues 37–75 (RGLR…GEER), 92–125 (AQIL…IEKI), 134–167 (GLSL…VKKG), 218–251 (AELY…FLQR), and 260–293 (AFSL…AVSI). Positions 37 to 75 (RGLRNAGMKANDERMFKDAIEKLRHAISLLHNRVFGEER) match the RxLR-dEER motif.

Belongs to the RxLR effector family.

It localises to the secreted. The protein resides in the host cytoplasm. Its subcellular location is the host nucleus. It is found in the host nucleolus. Functionally, secreted effector that suppresses pattern-triggered immunity (PTI) in plant host. This is Secreted RxLR effector protein RXLR-C07 from Plasmopara halstedii (Downy mildew of sunflower).